The primary structure comprises 243 residues: Venom peptide isomerase heavy chain (243 aa).

The Peptidase S1 domain maps to 1 to 243 (IVGGKTAKFG…YTNWMSKNMV (243 aa)). An intrachain disulfide couples cysteine 31 to cysteine 47. Residues histidine 46 and aspartate 96 each act as charge relay system in the active site. A glycan (N-linked (GlcNAc...) asparagine) is linked at asparagine 127. 2 cysteine pairs are disulfide-bonded: cysteine 159/cysteine 181 and cysteine 190/cysteine 219. Serine 194 functions as the Charge relay system in the catalytic mechanism.

It belongs to the peptidase S1 family. In terms of assembly, heterodimer with venom peptide isomerase light chain; disulfide-linked. N-linked glycan at Asn-127 consists of Man3-GlcNAc2-Fuc. As to expression, expressed by the venom gland.

Its subcellular location is the secreted. Its function is as follows. Peptide isomerase that inverts the chirality at the Ser-81 of omega-Aga IVB. Acts cofactor-independently. In Agelenopsis aperta (North American funnel-web spider), this protein is Venom peptide isomerase heavy chain.